A 916-amino-acid polypeptide reads, in one-letter code: Protein O-GlcNAcase (916 aa).

Residues 1 to 50 (MVQKESQAALEERESERNANPASVSGASLEPSAAPAPGEDNPSGAGAAAG) are disordered. The 277-residue stretch at 60–336 (FLCGVVEGFY…TLATWYKSNM (277 aa)) folds into the GH84 domain. A protein is bound by residues G67, K98, and D174. Residue D175 is the Proton donor of the active site. A protein-binding positions include Y219, 278–280 (WDN), D285, and N313. S364 is subject to Phosphoserine. The tract at residues 440–480 (QGAALSGEPSALTKEEEKKQPDEEPMDMVVEKQEESEHKSD) is disordered. Basic and acidic residues-rich tracts occupy residues 452 to 461 (TKEEEKKQPD) and 468 to 480 (VVEK…HKSD).

The protein belongs to the glycosyl hydrolase 84 family. Monomer. Interacts with CLOCK. Proteolytically cleaved by caspase-3 during apoptosis. The fragments interact with each other; cleavage does not decrease enzyme activity. Detected in spleen (at protein level). Ubiquitous. Expressed at highest levels in the brain and spleen.

Its subcellular location is the nucleus. It localises to the cytoplasm. It carries out the reaction 3-O-(N-acetyl-beta-D-glucosaminyl)-L-seryl-[protein] + H2O = N-acetyl-D-glucosamine + L-seryl-[protein]. It catalyses the reaction 3-O-(N-acetyl-beta-D-glucosaminyl)-L-threonyl-[protein] + H2O = L-threonyl-[protein] + N-acetyl-D-glucosamine. Its activity is regulated as follows. Inhibited by Cu(2+), Hg(2+), Cd(2+) and Zn(2+) at 1 mM. Not inhibited by Co(2+), Mg(2+), Ca(2+), Mn(2+), Fe(3+) and EDTA. Also inhibited by sodium chloride at 1M and 2-amino-2-hydroxymethyl-1,3-propanediol (trishydroxymethylaminomethane) at 75 mM. Its function is as follows. Cleaves GlcNAc but not GalNAc from O-glycosylated proteins. Deglycosylates a large and diverse number of proteins, such as CRYAB, ELK1, GSDMD, LMNB1 and TAB1. Can use p-nitrophenyl-beta-GlcNAc and 4-methylumbelliferone-GlcNAc as substrates but not p-nitrophenyl-beta-GalNAc or p-nitrophenyl-alpha-GlcNAc (in vitro). Does not bind acetyl-CoA and does not have histone acetyltransferase activity. Lacks enzyme activity. The polypeptide is Protein O-GlcNAcase (Rattus norvegicus (Rat)).